The primary structure comprises 190 residues: MPRAFLVRSRRPQPPNWGHLPDQLRGDAYIPDCSSLGGPPAQQSSSVRDPWTAQPTQGNLTSAPRGPGTLGCPLCPKAFPLQRMLTRHLKCHSPVRRHLCRCCGKGFHDAFDLKRHMRTHTGIRPFRCSACGKAFTQRCSLEAHLAKVHGQPASYAYRERREKLHVCEDCGFTSSRPDTYAQHRALHRAA.

2 disordered regions span residues 1–21 (MPRA…GHLP) and 35–65 (SLGG…SAPR). The segment covering 41 to 62 (AQQSSSVRDPWTAQPTQGNLTS) has biased composition (polar residues). 4 consecutive C2H2-type zinc fingers follow at residues 70 to 92 (LGCP…LKCH), 98 to 120 (HLCR…MRTH), 126 to 149 (FRCS…AKVH), and 165 to 187 (HVCE…RALH).

This sequence belongs to the krueppel C2H2-type zinc-finger protein family.

The protein localises to the nucleus. In terms of biological role, may act as a transcription regulator. This is Putative transcription factor ovo-like protein 3 (OVOL3) from Homo sapiens (Human).